The following is a 429-amino-acid chain: Glutamate-1-semialdehyde 2,1-aminomutase 2 (429 aa).

K268 bears the N6-(pyridoxal phosphate)lysine mark.

This sequence belongs to the class-III pyridoxal-phosphate-dependent aminotransferase family. HemL subfamily. In terms of assembly, homodimer. Pyridoxal 5'-phosphate serves as cofactor.

Its subcellular location is the cytoplasm. The catalysed reaction is (S)-4-amino-5-oxopentanoate = 5-aminolevulinate. The protein operates within porphyrin-containing compound metabolism; protoporphyrin-IX biosynthesis; 5-aminolevulinate from L-glutamyl-tRNA(Glu): step 2/2. The protein is Glutamate-1-semialdehyde 2,1-aminomutase 2 of Listeria monocytogenes serotype 4a (strain HCC23).